The primary structure comprises 316 residues: Cell division protein FtsQ (316 aa).

A disordered region spans residues 1-34; the sequence is MAKAARRTKSAPARRSPRRHARQTGATIRRPKRP. Topologically, residues 1–61 are cytoplasmic; sequence MAKAARRTKS…HPLLKQMAKR (61 aa). Residues 62–80 traverse the membrane as a helical segment; it reads LLLILVIVGFLAGLWAARW. Residues 81–316 are Periplasmic-facing; that stretch reads PQLLATKTGE…AADPLVSDRI (236 aa). In terms of domain architecture, POTRA spans 97 to 165; that stretch reads FSVRHVEIVG…DTLVVDIVER (69 aa). Residues 295–316 form a disordered region; that stretch reads PEPVKKATKPAKAADPLVSDRI.

Belongs to the FtsQ/DivIB family. FtsQ subfamily.

The protein resides in the cell inner membrane. Essential cell division protein. In Zymomonas mobilis subsp. mobilis (strain ATCC 31821 / ZM4 / CP4), this protein is Cell division protein FtsQ.